Here is a 128-residue protein sequence, read N- to C-terminus: Large ribosomal subunit protein bL19 (128 aa).

The protein belongs to the bacterial ribosomal protein bL19 family.

In terms of biological role, this protein is located at the 30S-50S ribosomal subunit interface and may play a role in the structure and function of the aminoacyl-tRNA binding site. The protein is Large ribosomal subunit protein bL19 of Paraburkholderia xenovorans (strain LB400).